We begin with the raw amino-acid sequence, 858 residues long: Volume-regulated anion channel subunit LRRC8D (858 aa).

The Cytoplasmic portion of the chain corresponds to 1 to 22 (MFTLAEVASLNDIQPTYRILKP). A helical membrane pass occupies residues 23–48 (WWDVFMDYLAVVMLMVAIFAGTMQLT). Residues 49–163 (KDQVVCLPVL…YHLALPWYSK (115 aa)) are Extracellular-facing. The cysteines at positions 54 and 354 are disulfide-linked. The helical transmembrane segment at 164–182 (YFPYLALIHTIILMVSSNF) threads the bilayer. At 183 to 308 (WFKYPKTCSK…EDSDLIYKLY (126 aa)) the chain is on the cytoplasmic side. The interval 221–251 (SEENKQRITGAQTLPKHVSTSSDEGSPSAST) is disordered. A compositionally biased stretch (polar residues) spans 227–251 (RITGAQTLPKHVSTSSDEGSPSAST). 3 positions are modified to phosphoserine: Ser241, Ser242, and Ser246. Residues 309–328 (VVQTVIKTAKFIFILCYTAN) form a helical membrane-spanning segment. Residues 329-360 (FVNAISFEHVCKPKVEHLIGYEVFECTHNMAY) are Extracellular-facing. The chain crosses the membrane as a helical span at residues 361–386 (MLKKLLISYISIICVYGFICLYTLFW). Residues 387–858 (LFRIPLKEYS…DINIPFANGI (472 aa)) are Cytoplasmic-facing. 13 LRR repeats span residues 514 to 534 (NLQE…AFSF), 538 to 559 (HLRC…VYLL), 561 to 582 (NLRE…IGLE), 589 to 609 (HLKI…ITDV), 612 to 632 (HLTK…NSLK), 636 to 657 (NVAE…IFSL), 659 to 680 (NLQE…ISFQ), 684 to 705 (RLTC…ITHV), 707 to 728 (NLES…VFSL), 730 to 751 (KLRC…IGLL), 753 to 774 (NLQH…LFKC), 776 to 797 (KLRT…VGQL), and 799 to 820 (QLTQ…LGQC).

The protein belongs to the LRRC8 family. In terms of assembly, heterohexamer; oligomerizes with other LRRC8 proteins (LRRC8A, LRRC8B, LRRC8C and/or LRRC8E) to form a heterohexamer. In vivo, the subunit composition may depend primarily on expression levels, and heterooligomeric channels containing various proportions of the different LRRC8 proteins may coexist.

The protein resides in the cell membrane. It localises to the endoplasmic reticulum membrane. It catalyses the reaction chloride(in) = chloride(out). The catalysed reaction is iodide(out) = iodide(in). The enzyme catalyses taurine(out) = taurine(in). In terms of biological role, non-essential component of the volume-regulated anion channel (VRAC, also named VSOAC channel), an anion channel required to maintain a constant cell volume in response to extracellular or intracellular osmotic changes. The VRAC channel conducts iodide better than chloride and can also conduct organic osmolytes like taurine. Plays a redundant role in the efflux of amino acids, such as aspartate, in response to osmotic stress. LRRC8A and LRRC8D are required for the uptake of the drug cisplatin. Channel activity requires LRRC8A plus at least one other family member (LRRC8B, LRRC8C, LRRC8D or LRRC8E); channel characteristics depend on the precise subunit composition. Also acts as a regulator of glucose-sensing in pancreatic beta cells: VRAC currents, generated in response to hypotonicity- or glucose-induced beta cell swelling, depolarize cells, thereby causing electrical excitation, leading to increase glucose sensitivity and insulin secretion. VRAC channels containing LRRC8D inhibit transport of immunoreactive cyclic dinucleotide GMP-AMP (2'-3'-cGAMP), an immune messenger produced in response to DNA virus in the cytosol. Mediates the import of the antibiotic blasticidin-S into the cell. The protein is Volume-regulated anion channel subunit LRRC8D of Homo sapiens (Human).